Here is a 491-residue protein sequence, read N- to C-terminus: UDP-glycosyltransferase 73C1 (491 aa).

UDP-alpha-D-glucose contacts are provided by residues S292, 352-354 (SPQ), 369-377 (HCGWNSTLE), and 391-394 (FGDQ).

The protein belongs to the UDP-glycosyltransferase family.

Its function is as follows. Involved in the O-glucosylation of trans-zeatin and dihydrozeatin. Also active in vitro on cis-zeatin, dihydrozeatin-9-N-Glc, and olomoucine. Can detoxify the explosive 2,4,6-trinitrotoluene in plant by forming O- or C-glucose conjugates. This Arabidopsis thaliana (Mouse-ear cress) protein is UDP-glycosyltransferase 73C1 (UGT73C1).